Reading from the N-terminus, the 667-residue chain is Leucine zipper putative tumor suppressor 2 (667 aa).

A compositionally biased stretch (low complexity) spans 1–25 (MAIVQTLPVPLEPAPEAATAQQAPA). Disordered regions lie at residues 1 to 132 (MAIV…PVSG), 150 to 325 (PVLP…DEAL), and 516 to 541 (QEAE…PPVP). A required for centrosomal localization region spans residues 1-333 (MAIVQTLPVP…ALLHCVLEGK (333 aa)). A compositionally biased stretch (polar residues) spans 172–181 (PSGSQGSLTQ). Residues 187–198 (ASSSSSSSSSAA) show a composition bias toward low complexity. Over residues 212-232 (PSGTLSDSGRNSLSSLPTYST) the composition is skewed to polar residues. Low complexity predominate over residues 241–282 (SPGGHLPSHGPGRGALPGPARGAPTGPSHSDSGRSSSSKSTG). Residue S248 is modified to Phosphoserine. The segment covering 283–294 (SLGGRLAGGLLG) has biased composition (gly residues). S295 is modified (phosphoserine). Over residues 310 to 321 (SPPPPPPPPPPS) the composition is skewed to pro residues. A coiled-coil region spans residues 329 to 647 (VLEGKLRDRE…LELEARELAD (319 aa)). Residues 445–667 (SGEISLLKQQ…CLEEITATEI (223 aa)) form a sufficient for interaction with CTNNB1 region. Positions 448 to 667 (ISLLKQQLKE…CLEEITATEI (220 aa)) are sufficient for interaction with KATNB1 and for inhibition of katanin-mediated microtubule severing. The segment covering 516–526 (QEAERLREKAG) has biased composition (basic and acidic residues). Position 568 is a phosphoserine (S568). Positions 629 to 638 (LEQELQQLSL) match the Nuclear export signal motif.

The protein belongs to the LZTS2 family. Interacts with KATNB1. Also interacts with CTNNB1, gamma-tubulin and KIF23.

It localises to the cytoplasm. It is found in the cytoskeleton. Its subcellular location is the microtubule organizing center. The protein localises to the centrosome. Its function is as follows. Negative regulator of katanin-mediated microtubule severing and release from the centrosome. Required for central spindle formation and the completion of cytokinesis. May negatively regulate axonal outgrowth by preventing the formation of microtubule bundles that are necessary for transport within the elongating axon. Negative regulator of the Wnt signaling pathway. Represses beta-catenin-mediated transcriptional activation by promoting the nuclear exclusion of beta-catenin. In Bos taurus (Bovine), this protein is Leucine zipper putative tumor suppressor 2.